A 119-amino-acid polypeptide reads, in one-letter code: Ubiquinone biosynthesis accessory factor UbiK (119 aa).

A coiled-coil region spans residues 79-99 (LLRTREKLALLEQRLSELEAR). A compositionally biased stretch (basic and acidic residues) spans 96-106 (LEARDKPEEVK). The interval 96 to 119 (LEARDKPEEVKPAPAIPPVDPQQE) is disordered. The segment covering 109-119 (PAIPPVDPQQE) has biased composition (pro residues).

This sequence belongs to the UbiK family. As to quaternary structure, homotrimer.

It is found in the cytoplasm. It functions in the pathway cofactor biosynthesis; ubiquinone biosynthesis. Required for efficient ubiquinone (coenzyme Q) biosynthesis under aerobic conditions. UbiK is probably an accessory factor of Ubi enzymes and facilitates ubiquinone biosynthesis by acting as an assembly factor, a targeting factor, or both. Dispensable for ubiquinone biosynthesis under anaerobiosis. Required for proliferation in macrophages and virulence in mice. Significantly contributes to colonization and invasion as well as host inflammation and innate immunity after infection. In vitro, has membrane fusogenic activity at acidic pH. The sequence is that of Ubiquinone biosynthesis accessory factor UbiK from Salmonella typhimurium (strain LT2 / SGSC1412 / ATCC 700720).